A 245-amino-acid chain; its full sequence is tRNA1(Val) (adenine(37)-N6)-methyltransferase (245 aa).

Belongs to the methyltransferase superfamily. tRNA (adenine-N(6)-)-methyltransferase family.

It is found in the cytoplasm. The enzyme catalyses adenosine(37) in tRNA1(Val) + S-adenosyl-L-methionine = N(6)-methyladenosine(37) in tRNA1(Val) + S-adenosyl-L-homocysteine + H(+). In terms of biological role, specifically methylates the adenine in position 37 of tRNA(1)(Val) (anticodon cmo5UAC). This is tRNA1(Val) (adenine(37)-N6)-methyltransferase from Shigella sonnei (strain Ss046).